Consider the following 955-residue polypeptide: Aminopeptidase A (955 aa).

Over 1–17 (MDIEDKSSKMHCMKGKH) the chain is Cytoplasmic. The helical; Signal-anchor for type II membrane protein transmembrane segment at 18–38 (VAIICGVVIAVGLILGLGLGL) threads the bilayer. The Extracellular segment spans residues 39–955 (GLKPEACNPP…LENSEQPNFV (917 aa)). The tract at residues 49–69 (EDNGLLSTKPPTTSTPNVTNP) is disordered. Low complexity predominate over residues 55-69 (STKPPTTSTPNVTNP). 3 N-linked (GlcNAc...) asparagine glycosylation sites follow: N65, N118, and N192. E218 provides a ligand contact to substrate. N-linked (GlcNAc...) asparagine glycans are attached at residues N312, N319, and N335. 352–356 (GAMEN) lines the substrate pocket. H388 is a binding site for Zn(2+). E389 acts as the Proton acceptor in catalysis. H392 and E411 together coordinate Zn(2+). N458, N547, N584, N592, N647, N674, N681, N759, N766, N823, and N836 each carry an N-linked (GlcNAc...) asparagine glycan. Residue R882 coordinates substrate.

It belongs to the peptidase M1 family. Homodimer; disulfide-linked. Zn(2+) serves as cofactor.

The protein localises to the cell membrane. It catalyses the reaction Release of N-terminal glutamate (and to a lesser extent aspartate) from a peptide.. Its activity is regulated as follows. The partially purified protein is inhibited by the aminopeptidase competitive inhibitors amastatin (Leu and acidic inhibitor), and bestatin (Leu inhibitor), by chelating agents EDTA, and 1,10-Phenanthroline, as well as by Zn(2+) ions. Substrate specificity is modulated by Ca(2+), Ba(2+), and Mn(2+) ions which enhances the enzymatic activity for cleavage of acidic residues. Venom protein that cleaves N-terminal acidic residues from peptides with high potency in presence of calcium. It may have several roles in venom including alteration of blood pressure by cleaving circulating angiotensin-2, general degradation of host tissue, increase of permeability to other venom components, and/or processing of other toxins in the venom. The polypeptide is Aminopeptidase A (Gloydius brevicauda (Korean slamosa snake)).